The primary structure comprises 310 residues: MSQNLIRIATRKSPLAMWQAEFVKAELEKIHEGLTVELLPMSTKGDIILDTPLAKVGGKGLFVKELEVAMLEGKADIAVHSMKDVPVEFPEGLGLEVICEREDPRDAFVSNTYKTIEDLPQGAVVGTSSLRRQCQIRAARPDLVIKDLRGNVGTRLAKLDAGNYDAIILAAAGLKRLKLEERIASFISAEQSLPANGQGAVGIECRTDDARVKALLAPLEHAETRMRVTAERAMNTRLEGGCQVPIGAYAEIDGDTLSLRGLVGNPDGSQIITAASSGNKADAEKLGVALAEELLAKGAKTILDAVYANA.

Cys242 is modified (S-(dipyrrolylmethanemethyl)cysteine).

This sequence belongs to the HMBS family. As to quaternary structure, monomer. Dipyrromethane is required as a cofactor.

It catalyses the reaction 4 porphobilinogen + H2O = hydroxymethylbilane + 4 NH4(+). It functions in the pathway porphyrin-containing compound metabolism; protoporphyrin-IX biosynthesis; coproporphyrinogen-III from 5-aminolevulinate: step 2/4. Its function is as follows. Tetrapolymerization of the monopyrrole PBG into the hydroxymethylbilane pre-uroporphyrinogen in several discrete steps. This chain is Porphobilinogen deaminase, found in Shewanella halifaxensis (strain HAW-EB4).